The primary structure comprises 320 residues: MPSISVRRLFDDNQYKLQLAWAAGNSGADNRIGVEADKPVLALVGHLNFIHPNQIQVVGLAESEYLNRLESGETGYQFGDLFDISMSLVIVANGLPVSPGLRDYCHKNDIPLLTSKLESPYLMDVLRIYLQRTLAASSVKHGVFLDVFEIGVLITGHSGLGKSELALELISRGHSLIADDAVELFRIGPETLEGRCSPMLRDFLEVRGLGILNIRHIFGETSIRPKKILQLIINLVEADDEYMKQLDRLSIRTETESILNVNVRSVTLPVAVGRNLAVLVEAAVRNYILQLRGKDSTREFLERHQTQLKENEQHNENRPD.

Residues His141 and Lys162 contribute to the active site. 156 to 163 (GHSGLGKS) is an ATP binding site. Ser163 lines the Mg(2+) pocket. Catalysis depends on Asp180, which acts as the Proton acceptor; for phosphorylation activity. Proton donor; for dephosphorylation activity. The tract at residues 204-213 (LEVRGLGILN) is important for the catalytic mechanism of both phosphorylation and dephosphorylation. Glu205 provides a ligand contact to Mg(2+). Arg248 is an active-site residue. The important for the catalytic mechanism of dephosphorylation stretch occupies residues 269 to 274 (PVAVGR).

Belongs to the HPrK/P family. Homohexamer. Requires Mg(2+) as cofactor.

The enzyme catalyses [HPr protein]-L-serine + ATP = [HPr protein]-O-phospho-L-serine + ADP + H(+). It catalyses the reaction [HPr protein]-O-phospho-L-serine + phosphate + H(+) = [HPr protein]-L-serine + diphosphate. In terms of biological role, catalyzes the ATP- as well as the pyrophosphate-dependent phosphorylation of a specific serine residue in HPr, a phosphocarrier protein of the phosphoenolpyruvate-dependent sugar phosphotransferase system (PTS). HprK/P also catalyzes the pyrophosphate-producing, inorganic phosphate-dependent dephosphorylation (phosphorolysis) of seryl-phosphorylated HPr (P-Ser-HPr). The protein is HPr kinase/phosphorylase of Neisseria meningitidis serogroup A / serotype 4A (strain DSM 15465 / Z2491).